We begin with the raw amino-acid sequence, 273 residues long: Outer capsid protein VP7 (273 aa).

It belongs to the aquareoviridae outer capsid VP7 protein family. In terms of assembly, interacts with VP4 and VP6.

It localises to the virion. Interacts with VP4 to form the outer icosahedral capsid with an incomplete T=13 symmetry, about 80 nm in diameter, and consisting of 200 VP4-VP7 trimers. The polypeptide is Outer capsid protein VP7 (S10) (Ctenopharyngodon idella (Grass carp)).